The sequence spans 293 residues: tRNA pseudouridine synthase B (293 aa).

Aspartate 39 functions as the Nucleophile in the catalytic mechanism.

It belongs to the pseudouridine synthase TruB family. Type 1 subfamily.

It catalyses the reaction uridine(55) in tRNA = pseudouridine(55) in tRNA. Responsible for synthesis of pseudouridine from uracil-55 in the psi GC loop of transfer RNAs. In Rickettsia bellii (strain RML369-C), this protein is tRNA pseudouridine synthase B.